The following is a 323-amino-acid chain: MFATQTRINQNFNSIPDDLFEAIADLKKELNAVILAHYYQEPDIQDIADYIGDSLGLSQKAAETDADVIVFAGVHFMAETAKILNPNKLVLLPDLDAGCSLADSCPPEEFGKFKAAHPDAIVVSYINCTAAIKAMSDIICTSSNSVKIVKQIPTDQPIIFAPDKNLGRYVMEQTGRDLILWSGSCIVHETFSEKKIVQLKIEHPEAEIIAHPECEPNLLRHANYIGSTTALLKYCQESQEQEFIVATEPGIIHQMQKREPKKNFIPAPAMNNCACNECPHMRLNNLEKLYLAMKNKTPEIMIPEETRVAALKPIQKMLELSFT.

2 residues coordinate iminosuccinate: His-37 and Ser-54. Cys-99 contributes to the [4Fe-4S] cluster binding site. Residues 125-127 and Ser-142 each bind iminosuccinate; that span reads YIN. A [4Fe-4S] cluster-binding site is contributed by Cys-185. Iminosuccinate-binding positions include 211-213 and Thr-228; that span reads HPE. Position 278 (Cys-278) interacts with [4Fe-4S] cluster.

It belongs to the quinolinate synthase family. Type 2 subfamily. Requires [4Fe-4S] cluster as cofactor.

It localises to the cytoplasm. The enzyme catalyses iminosuccinate + dihydroxyacetone phosphate = quinolinate + phosphate + 2 H2O + H(+). It participates in cofactor biosynthesis; NAD(+) biosynthesis; quinolinate from iminoaspartate: step 1/1. In terms of biological role, catalyzes the condensation of iminoaspartate with dihydroxyacetone phosphate to form quinolinate. This is Quinolinate synthase from Trichodesmium erythraeum (strain IMS101).